The sequence spans 185 residues: Protein GrpE (185 aa).

Residues 1 to 44 are disordered; it reads MSEEELTNGPGPEPQPEPLEVESAPLEAAPAGEPDKALLEAQQQ.

It belongs to the GrpE family. As to quaternary structure, homodimer.

The protein localises to the cytoplasm. In terms of biological role, participates actively in the response to hyperosmotic and heat shock by preventing the aggregation of stress-denatured proteins, in association with DnaK and GrpE. It is the nucleotide exchange factor for DnaK and may function as a thermosensor. Unfolded proteins bind initially to DnaJ; upon interaction with the DnaJ-bound protein, DnaK hydrolyzes its bound ATP, resulting in the formation of a stable complex. GrpE releases ADP from DnaK; ATP binding to DnaK triggers the release of the substrate protein, thus completing the reaction cycle. Several rounds of ATP-dependent interactions between DnaJ, DnaK and GrpE are required for fully efficient folding. The protein is Protein GrpE of Methylococcus capsulatus (strain ATCC 33009 / NCIMB 11132 / Bath).